Here is a 320-residue protein sequence, read N- to C-terminus: Mas-related G-protein coupled receptor member D (320 aa).

Residues 1 to 33 (MNQTLNSSGTAELALNHSRGSVVHAACLVLSSL) are Extracellular-facing. N-linked (GlcNAc...) asparagine glycosylation is found at N2, N6, and N16. A helical membrane pass occupies residues 34-54 (AMFTCLCGMAGNSMVIWLLGF). Residues 55 to 62 (RMRRTPFS) are Cytoplasmic-facing. Residues 63–83 (IYILNLAAADLLFVFCMAAML) traverse the membrane as a helical segment. Topologically, residues 84-112 (SLETQPLVSTTDKVHELMKRLKYFAYTVG) are extracellular. A helical transmembrane segment spans residues 113–133 (LSLLTAISTQRCLSVLFPIWF). Over 134–142 (KCHRPRHLS) the chain is Cytoplasmic. Residues 143-163 (AWVCALLWMLCLLTNGLTSCF) traverse the membrane as a helical segment. Residues 164-182 (CSKFLKFNKDQCFRVDMVQ) are Extracellular-facing. The chain crosses the membrane as a helical span at residues 183-203 (AALIMGVLTPVMTLSSLTLFV). The Cytoplasmic portion of the chain corresponds to 204–218 (RVRRSSQQWRRQPTR). A helical transmembrane segment spans residues 219–239 (LFVVVLASVLVFLICSLPLGF). Over 240–257 (YWFVLYWLNLPPDTKVLY) the chain is Extracellular. The chain crosses the membrane as a helical span at residues 258 to 280 (FNLSRLSSSMSSSANPLIYFLVG). The Cytoplasmic segment spans residues 281-320 (SRRSRRLQGSLGTVLQRALREEPELEGGETPTTGTNEMGA). The segment at 301–320 (EEPELEGGETPTTGTNEMGA) is disordered. Over residues 308-320 (GETPTTGTNEMGA) the composition is skewed to low complexity.

Belongs to the G-protein coupled receptor 1 family. Mas subfamily. In terms of tissue distribution, co-expressed in the small diameter neurons with P2X3 and VR1 in dorsal root ganglia.

It localises to the cell membrane. May regulate nociceptor function and/or development, including the sensation or modulation of pain. Functions as a specific membrane receptor for beta-alanine. The receptor couples with G-protein G(q) and G(i). The sequence is that of Mas-related G-protein coupled receptor member D (MRGPRD) from Macaca fascicularis (Crab-eating macaque).